Consider the following 427-residue polypeptide: Lactadherin (427 aa).

A signal peptide spans 1 to 22 (MQFSRVLAALCGVLLCASGLFA). EGF-like domains are found at residues 24–61 (SGDF…LVCN) and 64–108 (EKGP…IHCE). Intrachain disulfides connect cysteine 28–cysteine 39, cysteine 33–cysteine 49, and cysteine 51–cysteine 60. A glycan (N-linked (GlcNAc...) asparagine) is linked at asparagine 61. Disulfide bonds link cysteine 68–cysteine 79, cysteine 73–cysteine 96, cysteine 98–cysteine 107, cysteine 111–cysteine 267, cysteine 254–cysteine 258, and cysteine 272–cysteine 427. Residues 87–89 (RGD) carry the Cell attachment site motif. F5/8 type C domains follow at residues 111-267 (CSTK…LLGC) and 272-427 (CSEP…LLGC). Asparagine 230 carries an N-linked (GlcNAc...) asparagine glycan. 2 N-linked (GlcNAc...) asparagine glycosylation sites follow: asparagine 280 and asparagine 390.

Spleen, lung, heart, brain and muscle.

It localises to the membrane. Its subcellular location is the secreted. The protein resides in the cytoplasmic vesicle. It is found in the secretory vesicle. The protein localises to the acrosome membrane. In terms of biological role, contributes to phagocytic removal of apoptotic cells in many tissues. Plays an important role in the maintenance of intestinal epithelial homeostasis and the promotion of mucosal healing. Promotes VEGF-dependent neovascularization. Specific ligand for the alpha-v/beta-3 and alpha-v/beta-5 receptors. Also binds to phosphatidylserine-enriched cell surfaces in a receptor-independent manner. Zona pellucida-binding protein which may play a role in gamete interaction. Appears to participate in the O-acetylation of GD3 ganglioside sialic acid. The polypeptide is Lactadherin (Mfge8) (Rattus norvegicus (Rat)).